The chain runs to 430 residues: UDP-N-acetylglucosamine 1-carboxyvinyltransferase (430 aa).

22–23 (KN) contacts phosphoenolpyruvate. Arg-102 lines the UDP-N-acetyl-alpha-D-glucosamine pocket. The active-site Proton donor is the Cys-126. Position 126 is a 2-(S-cysteinyl)pyruvic acid O-phosphothioketal (Cys-126). UDP-N-acetyl-alpha-D-glucosamine contacts are provided by residues 131–135 (RPVDL), 172–175 (KVSV), Asp-317, and Ile-339.

The protein belongs to the EPSP synthase family. MurA subfamily.

Its subcellular location is the cytoplasm. It carries out the reaction phosphoenolpyruvate + UDP-N-acetyl-alpha-D-glucosamine = UDP-N-acetyl-3-O-(1-carboxyvinyl)-alpha-D-glucosamine + phosphate. It participates in cell wall biogenesis; peptidoglycan biosynthesis. Cell wall formation. Adds enolpyruvyl to UDP-N-acetylglucosamine. This is UDP-N-acetylglucosamine 1-carboxyvinyltransferase from Rhizobium etli (strain ATCC 51251 / DSM 11541 / JCM 21823 / NBRC 15573 / CFN 42).